A 360-amino-acid chain; its full sequence is Photosystem II protein D1 (360 aa).

3 helical membrane-spanning segments follow: residues 30-47, 119-134, and 143-157; these read YVGWFGVLMIPCLLTAAA, HFLIGISAYMGRQWEL, and WICVAYSAPVSAAFA. Residue His119 coordinates chlorophyll a. Tyr127 provides a ligand contact to pheophytin a. Residues Asp171 and Glu190 each coordinate [CaMn4O5] cluster. A helical membrane pass occupies residues 198–219; it reads FHMAGVAGMFGGSLFSAMHGSL. His199 contributes to the chlorophyll a binding site. A quinone-binding positions include His216 and 265–266; that span reads SF. His216 is a binding site for Fe cation. Fe cation is bound at residue His273. A helical transmembrane segment spans residues 275 to 289; sequence FLAVFPVVCVWLTSM. His333, Glu334, Asp343, and Ala345 together coordinate [CaMn4O5] cluster. The propeptide occupies 346–360; the sequence is AAESTTVALSAPAIG.

This sequence belongs to the reaction center PufL/M/PsbA/D family. PSII is composed of 1 copy each of membrane proteins PsbA, PsbB, PsbC, PsbD, PsbE, PsbF, PsbH, PsbI, PsbJ, PsbK, PsbL, PsbM, PsbT, PsbX, PsbY, Psb30/Ycf12, peripheral proteins PsbO, CyanoQ (PsbQ), PsbU, PsbV and a large number of cofactors. It forms dimeric complexes. The D1/D2 heterodimer binds P680, chlorophylls that are the primary electron donor of PSII, and subsequent electron acceptors. It shares a non-heme iron and each subunit binds pheophytin, quinone, additional chlorophylls, carotenoids and lipids. D1 provides most of the ligands for the Mn4-Ca-O5 cluster of the oxygen-evolving complex (OEC). There is also a Cl(-1) ion associated with D1 and D2, which is required for oxygen evolution. The PSII complex binds additional chlorophylls, carotenoids and specific lipids. serves as cofactor. Post-translationally, tyr-162 forms a radical intermediate that is referred to as redox-active TyrZ, YZ or Y-Z. In terms of processing, C-terminally processed by CtpA; processing is essential to allow assembly of the oxygen-evolving complex and thus photosynthetic growth.

Its subcellular location is the cellular thylakoid membrane. The enzyme catalyses 2 a plastoquinone + 4 hnu + 2 H2O = 2 a plastoquinol + O2. Photosystem II (PSII) is a light-driven water:plastoquinone oxidoreductase that uses light energy to abstract electrons from H(2)O, generating O(2) and a proton gradient subsequently used for ATP formation. It consists of a core antenna complex that captures photons, and an electron transfer chain that converts photonic excitation into a charge separation. The D1/D2 (PsbA/PsbD) reaction center heterodimer binds P680, the primary electron donor of PSII as well as several subsequent electron acceptors. The protein is Photosystem II protein D1 of Prochlorococcus marinus (strain MIT 9301).